Here is a 243-residue protein sequence, read N- to C-terminus: Vimentin A2 (243 aa).

The tract at residues 1-22 (GFSLQDELDFLKKLHDEELADV) is coil 1B. The IF rod domain occupies 1–188 (GFSLQDELDF…KLLEGEESRI (188 aa)). A linker 12 region spans residues 23–45 (QAQIQDQQVQVDMDMAKPDLTAA). A coil 2 region spans residues 46 to 184 (LRDVRLQYEN…ATYRKLLEGE (139 aa)). Positions 185–243 (ESRITTPLPNLSSFNLRDAILETKPILENTFSKKVLIKTIETRDGEVINESTQNHDDLE) are tail.

This sequence belongs to the intermediate filament family. In terms of assembly, homomer. In terms of processing, one of the most prominent phosphoproteins in various cells of mesenchymal origin. Phosphorylation is enhanced during cell division, at which time vimentin filaments are significantly reorganized. As to expression, expressed in low amounts in retina, optic nerve, and brain and in higher amounts in spinal cord.

Vimentins are class-III intermediate filaments found in various non-epithelial cells, especially mesenchymal cells. Vimentin is attached to the nucleus, endoplasmic reticulum, and mitochondria, either laterally or terminally. This chain is Vimentin A2, found in Carassius auratus (Goldfish).